A 488-amino-acid polypeptide reads, in one-letter code: MPERYGPRVIEHLVNPRNAGEVGGPSGVGEAGNAACGDQVRFTLRVGGDLRLQEVRYRAYGCAACIAAGSALAELAEGRSITGAAQISRGDIQEALGGPLPPGKEHGATLALDALHRAFEDYWSRQGDALLGGEGLGDGSGGRRGVVAAMSGGVDSAVTALLLKERGYEVVAVTFRLHDGEPGSRSCCSPDTVLFARETAHGLGIPHFTLNLRELFDRRVMRDFVGSYAAGRTPNPCVACNAHVKFHAAAFLADRLGLRHVATGHYARVGEGPCLERPEDGRKDQTYVLWPVPPRLLGRTIFPLGDYRKSEVRRIAEERGLAVARTPESQDICFIPDGDYRSFVRRRVRSEPGEIVDRQGRVLGRHAGVVDFTVGQRRGLGISAPTPLYVTEVRPRSRQVVVGSRRELEVRRMLVRGANWFLDPREAALVQVRYNGEPVPCELEEGAGGWEVALLEPVFGVAPGQSAVFYTRDGAKVVGGGIIARRDA.

The tract at residues 1 to 130 is nifU-like protein; that stretch reads MPERYGPRVI…DYWSRQGDAL (130 aa). The tract at residues 143-488 is tRNA-specific 2-thiouridylase MnmA; the sequence is RRGVVAAMSG…GGGIIARRDA (346 aa). Residues 149 to 156 and phenylalanine 175 each bind ATP; that span reads AMSGGVDS. Cysteine 240 functions as the Nucleophile in the catalytic mechanism. Cysteine 240 and cysteine 333 are oxidised to a cystine. Residue glycine 264 coordinates ATP. The segment at 283–285 is interaction with tRNA; sequence KDQ. The Cysteine persulfide intermediate role is filled by cysteine 333. The interaction with tRNA stretch occupies residues 433–434; that stretch reads RY.

The protein in the N-terminal section; belongs to the NifU family. In the C-terminal section; belongs to the MnmA/TRMU family.

It localises to the cytoplasm. It catalyses the reaction S-sulfanyl-L-cysteinyl-[protein] + uridine(34) in tRNA + AH2 + ATP = 2-thiouridine(34) in tRNA + L-cysteinyl-[protein] + A + AMP + diphosphate + H(+). In terms of biological role, may be involved in the formation or repair of [Fe-S] clusters present in iron-sulfur proteins. Its function is as follows. Catalyzes the 2-thiolation of uridine at the wobble position (U34) of tRNA, leading to the formation of s(2)U34. The chain is Bifunctional protein NifU/MnmA (nifU/mnmA) from Rubrobacter xylanophilus (strain DSM 9941 / JCM 11954 / NBRC 16129 / PRD-1).